Here is a 701-residue protein sequence, read N- to C-terminus: MHSDELLVEILVEELPAQALLNEYKEMPKKLHALFNKRALEVGNIEIFYTPRRLCLLIKDFPLLTQETKEEFFGPPVKIACNNEDKTQGLNALGLGFYQKLGLKDHQHFQTAFKNNKEVLYHAKIHEKEPTKDLIMPIVLEFLEDLNFGKSMRWGNVEKSFIRPIHNICVLFNGENFNDIEVKEYGFKTKQATKVHRQESFDFIEVDSPKAYFEVLEKNHVILDPKKREAKILQEIKELETEHHISIEIDRDLLDEVVAITEYPSALLGEFDKAFLKLPSEIITTSMKENQRYFATFCQKSQEESPTLHNGFIVVSNAINKDKQKIILGNQKVLKARLSDAVFFYENDLKKPLDNAPLESVVFVQGLGTLKDKMERESIIAQYLTQKYAPSLNMPLEKALELVKRAVQIAKADLLSEVVYEFSELQGIMGYYYALKQNENELVALSLKEQYLPASENAPLPSSVFSAIVALSLKLDSLFSLFSVGKIPSGSKDPFALRRLSFGLLKIIAHYGLEFDLKADLKSLFEKVGVYQSFDLEILEKFLLERFNNLIDCNPSIIRSVLNTNERDIVKIIQKVKALKRFLDDPKNAQKKELLFSAFKRLANINKDRNPNESSEFSISLFKESQEHALFEAFNAIKTSAFEGLDSKIEAYFGLHAPLEEYFKSVLVMDKDIEIQKNRKNFLWSVYQSFLEIGDIKEIAI.

The protein belongs to the class-II aminoacyl-tRNA synthetase family. In terms of assembly, tetramer of two alpha and two beta subunits.

Its subcellular location is the cytoplasm. The catalysed reaction is tRNA(Gly) + glycine + ATP = glycyl-tRNA(Gly) + AMP + diphosphate. The chain is Glycine--tRNA ligase beta subunit from Helicobacter pylori (strain G27).